The primary structure comprises 98 residues: NADH-ubiquinone oxidoreductase chain 4L (98 aa).

3 helical membrane passes run 1-21 (MSLI…GLLM), 29-49 (ALLC…LTIL), and 61-81 (IILL…LVMI).

The protein belongs to the complex I subunit 4L family. Core subunit of respiratory chain NADH dehydrogenase (Complex I) which is composed of 45 different subunits.

It is found in the mitochondrion inner membrane. It carries out the reaction a ubiquinone + NADH + 5 H(+)(in) = a ubiquinol + NAD(+) + 4 H(+)(out). Its function is as follows. Core subunit of the mitochondrial membrane respiratory chain NADH dehydrogenase (Complex I) which catalyzes electron transfer from NADH through the respiratory chain, using ubiquinone as an electron acceptor. Part of the enzyme membrane arm which is embedded in the lipid bilayer and involved in proton translocation. The polypeptide is NADH-ubiquinone oxidoreductase chain 4L (MT-ND4L) (Berardius bairdii (Baird's beaked whale)).